The primary structure comprises 263 residues: MARDRRDYYYRQAKEEGYRSRASFKLKQINERHHIINRGDSVVDLGAAPGGWLQVAKELSGGKVLGVDLQRIVPIEGVETIQGNINADSTIQKIIKTVGAKGADVVLCDAAPNLSGNWSYDHARSIELATSALECAKKILKPKGNFVVKVFQGDMFNDYMQKVRDNFVRTMAYSPKASRSQSAEIYVIGKKFLTAPLRKGDKFVVDIEKLGSSGDGAVLIEGFVVFVKEVEVGEKVRIKITDVKPNFAFADVAERLGKTEKPE.

Glycine 50, tryptophan 52, aspartate 68, asparagine 84, and aspartate 109 together coordinate S-adenosyl-L-methionine. The active-site Proton acceptor is lysine 149. The region spanning 196 to 254 (PLRKGDKFVVDIEKLGSSGDGAVLIEGFVVFVKEVEVGEKVRIKITDVKPNFAFADVAE) is the TRAM domain.

It belongs to the class I-like SAM-binding methyltransferase superfamily. RNA methyltransferase RlmE family.

The protein localises to the cytoplasm. The catalysed reaction is uridine(2552) in 23S rRNA + S-adenosyl-L-methionine = 2'-O-methyluridine(2552) in 23S rRNA + S-adenosyl-L-homocysteine + H(+). Its function is as follows. Specifically methylates the uridine in position 2552 of 23S rRNA at the 2'-O position of the ribose in the fully assembled 50S ribosomal subunit. This chain is Ribosomal RNA large subunit methyltransferase E, found in Methanosarcina barkeri (strain Fusaro / DSM 804).